A 195-amino-acid chain; its full sequence is A-type ATP synthase subunit E (195 aa).

The protein belongs to the V-ATPase E subunit family. In terms of assembly, has multiple subunits with at least A(3), B(3), C, D, E, F, H, I and proteolipid K(x).

The protein resides in the cell membrane. Its function is as follows. Component of the A-type ATP synthase that produces ATP from ADP in the presence of a proton gradient across the membrane. This Staphylothermus marinus (strain ATCC 43588 / DSM 3639 / JCM 9404 / F1) protein is A-type ATP synthase subunit E.